The following is a 128-amino-acid chain: MRFAIVVTGPAYGTQQASSALQFAHALVNEGHELSSVFFYREGVYNANQLTSPASDEFDLVRAWQQLGAQHGVALNICVAAALRRGIVDETEAKRLALASANLQPGFSLSGLGALAEASLTCDRVVQF.

The active-site Cysteine persulfide intermediate is the Cys-78.

This sequence belongs to the DsrE/TusD family. As to quaternary structure, heterohexamer, formed by a dimer of trimers. The hexameric TusBCD complex contains 2 copies each of TusB, TusC and TusD. The TusBCD complex interacts with TusE.

The protein localises to the cytoplasm. Part of a sulfur-relay system required for 2-thiolation of 5-methylaminomethyl-2-thiouridine (mnm(5)s(2)U) at tRNA wobble positions. Accepts sulfur from TusA and transfers it in turn to TusE. The sequence is that of Sulfurtransferase TusD from Citrobacter koseri (strain ATCC BAA-895 / CDC 4225-83 / SGSC4696).